The chain runs to 113 residues: Cholecystoxin (113 aa).

Positions 1-20 (MYGGICLCVLLAVLAISSSG) are cleaved as a signal peptide. A propeptide spanning residues 21-79 (QHISRSLNGNSLAAAIEQNFPEKHRPARTPDSNQRVESNIDEKANLGVLLARYLQKARR) is cleaved from the precursor. A disordered region spans residues 77–97 (ARRGTNGKPPDPKKESQDYLG). The residue at position 95 (Tyr-95) is a Sulfotyrosine. Phe-101 bears the Phenylalanine amide mark. A propeptide spanning residues 102–113 (GRRSAEEYEYSS) is cleaved from the precursor.

Belongs to the gastrin/cholecystokinin family. In terms of tissue distribution, expressed by the mandibular venom gland.

Its subcellular location is the secreted. Its function is as follows. Cholecystokinin-22: hypotensive neuropeptide that binds cholecystokinin receptor type A receptor (CCKAR). In terms of biological role, cholecystokinin-8: hypotensive neuropeptide that binds cholecystokinin receptor type A receptor (CCKAR). In Varanus varius (Lace monitor lizard), this protein is Cholecystoxin.